Reading from the N-terminus, the 637-residue chain is Chaperone protein HtpG (637 aa).

The a; substrate-binding stretch occupies residues 1–347 (MTQSVHAETH…SNDLPLNVSR (347 aa)). The tract at residues 348–564 (EILQDNKVTV…NHGMSTQMIK (217 aa)) is b. The c stretch occupies residues 565–637 (LMRAAGQPVP…SRINRLLLQA (73 aa)).

The protein belongs to the heat shock protein 90 family. As to quaternary structure, homodimer.

The protein localises to the cytoplasm. Molecular chaperone. Has ATPase activity. In Aeromonas salmonicida (strain A449), this protein is Chaperone protein HtpG.